Here is a 68-residue protein sequence, read N- to C-terminus: Cytotoxic linear peptide IsCT (68 aa).

The N-terminal stretch at 1 to 23 (MKTQFAILLVALVLFQMFAQSDA) is a signal peptide. Phe-36 carries the phenylalanine amide modification. Positions 40–68 (GLSDLDGLDELFDGEISKADRDFLRELMR) are excised as a propeptide.

It belongs to the non-disulfide-bridged peptide (NDBP) superfamily. Short antimicrobial peptide (group 4) family. In terms of processing, isCTf is an enzymatic proteolytic cleavage product of IsCT by the proteases present in the venom. In terms of tissue distribution, expressed by the venom gland.

Its subcellular location is the secreted. It is found in the target cell membrane. Shows weak hemolytic activity and antibacterial activity against both Gram-positive and Gram-negative bacteria probably by forming pores in the cell membrane. IsCT adopts an amphipathic alpha-helical structure. Functionally, shows neither hemolytic, nor antibacterial activities, probably because it cannot adopt amphipathic alpha-helical structure. The protein is Cytotoxic linear peptide IsCT of Opisthacanthus madagascariensis (Scorpion).